The chain runs to 58 residues: Large ribosomal subunit protein bL32 (58 aa).

The interval 1–23 (MAVPARHTSSAKKNRRRTHYKLT) is disordered. The segment covering 9–20 (SSAKKNRRRTHY) has biased composition (basic residues).

This sequence belongs to the bacterial ribosomal protein bL32 family.

This is Large ribosomal subunit protein bL32 (rpmF) from Lactococcus lactis subsp. cremoris (Streptococcus cremoris).